The following is a 282-amino-acid chain: Endonuclease V (282 aa).

Mg(2+) is bound by residues Asp-52 and Asp-126. The segment at 250-282 (SLGLPGPPTPRSPKAQRPVACPKGDSGESSALC) is disordered.

The protein belongs to the endonuclease V family. In terms of assembly, monomer. Interacts with PABPC1; the interaction is RNA-dependent and stimulates ENDOV activity. Mg(2+) is required as a cofactor.

The protein resides in the cytoplasm. The protein localises to the nucleus. It is found in the nucleolus. Its subcellular location is the stress granule. Inhibited by normal intracellular concentrations of ATP. Endoribonuclease that specifically cleaves inosine-containing RNAs: cleaves RNA at the second phosphodiester bond 3' to inosine. Active against both single-stranded and double-stranded RNAs. Has strong preference for single-stranded RNAs (ssRNAs) toward double-stranded RNAs (dsRNAs). Cleaves mRNAs and tRNAs containing inosine. Also able to cleave structure-specific dsRNA substrates containing the specific sites 5'-IIUI-3' and 5'-UIUU-3'. Inosine is present in a number of RNAs following editing; the function of inosine-specific endoribonuclease is still unclear: it could either play a regulatory role in edited RNAs, or be involved in antiviral response by removing the hyperedited long viral dsRNA genome that has undergone A-to-I editing. Binds branched DNA structures. Its function is as follows. Endoribonuclease that specifically cleaves inosine-containing RNAs: cleaves RNA at the second phosphodiester bond 3' to inosine. Active against both single-stranded and double-stranded RNAs. Cleaves tRNAs containing inosine. This is Endonuclease V (ENDOV) from Homo sapiens (Human).